A 461-amino-acid chain; its full sequence is Cysteine--tRNA ligase (461 aa).

Residue Cys28 participates in Zn(2+) binding. The 'HIGH' region signature appears at 30 to 40; sequence ITVYDLCHIGH. Zn(2+) is bound by residues Cys209, His234, and Glu238. Residues 266-270 carry the 'KMSKS' region motif; that stretch reads KMSKS. ATP is bound at residue Lys269.

It belongs to the class-I aminoacyl-tRNA synthetase family. In terms of assembly, monomer. Zn(2+) serves as cofactor.

The protein localises to the cytoplasm. It catalyses the reaction tRNA(Cys) + L-cysteine + ATP = L-cysteinyl-tRNA(Cys) + AMP + diphosphate. The polypeptide is Cysteine--tRNA ligase (Escherichia fergusonii (strain ATCC 35469 / DSM 13698 / CCUG 18766 / IAM 14443 / JCM 21226 / LMG 7866 / NBRC 102419 / NCTC 12128 / CDC 0568-73)).